A 339-amino-acid polypeptide reads, in one-letter code: Phosphate acyltransferase (339 aa).

This sequence belongs to the PlsX family. Homodimer. Probably interacts with PlsY.

It localises to the cytoplasm. The enzyme catalyses a fatty acyl-[ACP] + phosphate = an acyl phosphate + holo-[ACP]. It functions in the pathway lipid metabolism; phospholipid metabolism. Catalyzes the reversible formation of acyl-phosphate (acyl-PO(4)) from acyl-[acyl-carrier-protein] (acyl-ACP). This enzyme utilizes acyl-ACP as fatty acyl donor, but not acyl-CoA. The protein is Phosphate acyltransferase of Pasteurella multocida (strain Pm70).